A 78-amino-acid polypeptide reads, in one-letter code: Small ribosomal subunit protein bS18 (78 aa).

This sequence belongs to the bacterial ribosomal protein bS18 family. Part of the 30S ribosomal subunit. Forms a tight heterodimer with protein bS6.

Its function is as follows. Binds as a heterodimer with protein bS6 to the central domain of the 16S rRNA, where it helps stabilize the platform of the 30S subunit. The chain is Small ribosomal subunit protein bS18 from Frankia casuarinae (strain DSM 45818 / CECT 9043 / HFP020203 / CcI3).